The sequence spans 149 residues: Nucleoside diphosphate kinase (149 aa).

ATP-binding residues include Lys-9, Phe-57, Arg-85, Thr-91, Arg-102, and Asn-112. His-115 serves as the catalytic Pros-phosphohistidine intermediate.

It belongs to the NDK family. As to quaternary structure, homotetramer. Requires Mg(2+) as cofactor.

Its subcellular location is the cytoplasm. The catalysed reaction is dZDP + ATP = dZTP + ADP. It carries out the reaction a 2'-deoxyribonucleoside 5'-diphosphate + ATP = a 2'-deoxyribonucleoside 5'-triphosphate + ADP. It catalyses the reaction a ribonucleoside 5'-diphosphate + ATP = a ribonucleoside 5'-triphosphate + ADP. It participates in purine metabolism. In terms of biological role, major role in the synthesis of nucleoside triphosphates other than ATP. The ATP gamma phosphate is transferred to the NDP beta phosphate via a ping-pong mechanism, using a phosphorylated active-site intermediate. Its function is as follows. (Microbial infection) Catalyzes the phosphorylation of dZDP to dZTP, when the bacterium is infected by a phage that produces the substrate for the synthesis of dZTP (2- amino-2'-deoxyadenosine 5'-triphosphate), which is then used by the phage as a DNA polymerase substrate. This Synechococcus elongatus (strain ATCC 33912 / PCC 7942 / FACHB-805) (Anacystis nidulans R2) protein is Nucleoside diphosphate kinase.